The following is a 265-amino-acid chain: MEKVKAKKQYGQNFLKDSTILDKIIQSMPNNNNHIVEIGPGLGDLTKNLVKYKDLTAYEVDTDLIGILKSKFAIEIEKGNLKLIHTDVLEAWDKLKNLHDGKYDLIANLPYYIATNIILRAFEDELCEHIIVMVQKEVAEKFTAKTNDKEYSSLGIITELISINSKILFDVPAEAFDPPPKVTSSILYIKKDMSKSLDKDFNKFLKACFIQPRKKLSKNLTTIFDKNIIFEIYKELNINDNVRPHEVSSSLYSQMYTKVKNGRNK.

Asparagine 13, leucine 15, glycine 39, glutamate 59, aspartate 87, and asparagine 108 together coordinate S-adenosyl-L-methionine.

Belongs to the class I-like SAM-binding methyltransferase superfamily. rRNA adenine N(6)-methyltransferase family. RsmA subfamily.

It localises to the cytoplasm. The catalysed reaction is adenosine(1518)/adenosine(1519) in 16S rRNA + 4 S-adenosyl-L-methionine = N(6)-dimethyladenosine(1518)/N(6)-dimethyladenosine(1519) in 16S rRNA + 4 S-adenosyl-L-homocysteine + 4 H(+). Its function is as follows. Specifically dimethylates two adjacent adenosines (A1518 and A1519) in the loop of a conserved hairpin near the 3'-end of 16S rRNA in the 30S particle. May play a critical role in biogenesis of 30S subunits. This is Ribosomal RNA small subunit methyltransferase A from Aliarcobacter butzleri (strain RM4018) (Arcobacter butzleri).